A 166-amino-acid polypeptide reads, in one-letter code: MALGLEDKKAIVAEVNEAAKGALSAVVADSRGVTVDKMTVLRKTAREAGVYMRVVRNTLLRRAVEGTEFACLNDVLTGPTLIAFSNEHPGAAARLFKEFAKANQKFEIKAGAFNGEFIAAAQIDRLATLPTYDEAIAKLMATMKEASAGKLVRTIAAVRDQKQAAA.

The protein belongs to the universal ribosomal protein uL10 family. In terms of assembly, part of the ribosomal stalk of the 50S ribosomal subunit. The N-terminus interacts with L11 and the large rRNA to form the base of the stalk. The C-terminus forms an elongated spine to which L12 dimers bind in a sequential fashion forming a multimeric L10(L12)X complex.

Its function is as follows. Forms part of the ribosomal stalk, playing a central role in the interaction of the ribosome with GTP-bound translation factors. The protein is Large ribosomal subunit protein uL10 of Aeromonas salmonicida (strain A449).